We begin with the raw amino-acid sequence, 438 residues long: Protein phosphatase 2C homolog 2 (438 aa).

One can recognise a PPM-type phosphatase domain in the interval 23 to 294; that stretch reads IYGVSAMQGW…DNMTMVIIGF (272 aa). The Mn(2+) site is built by Asp-67, Gly-68, Asp-236, and Asp-285. Positions 370 to 438 are disordered; it reads VLTGSDDTEM…EKTPEESKKD (69 aa). Over residues 375-387 the composition is skewed to acidic residues; sequence DDTEMFDNADEDK. A compositionally biased stretch (basic and acidic residues) spans 398-438; the sequence is GKTDAKEETEAKPAPEAESSKPADGSEKKQDEKTPEESKKD.

Belongs to the PP2C family. Mg(2+) serves as cofactor. Requires Mn(2+) as cofactor.

It localises to the cytoplasm. It is found in the nucleus. The catalysed reaction is O-phospho-L-seryl-[protein] + H2O = L-seryl-[protein] + phosphate. It catalyses the reaction O-phospho-L-threonyl-[protein] + H2O = L-threonyl-[protein] + phosphate. In terms of biological role, dephosphorylating regulator for many key proteins. Negatively regulates the endoplasmic reticulum unfolded protein response. This chain is Protein phosphatase 2C homolog 2, found in Hypocrea jecorina (strain QM6a) (Trichoderma reesei).